The following is a 137-amino-acid chain: Ciliary microtubule inner protein 1 (137 aa).

In terms of tissue distribution, expressed in airway epithelial cells, renal tubular cells, pancreatic acinar cells and epithelial cells of the stomach, duodenum, and gallbladder (at protein level).

Its subcellular location is the cell projection. The protein localises to the cilium. This is Ciliary microtubule inner protein 1 from Homo sapiens (Human).